We begin with the raw amino-acid sequence, 125 residues long: Ribonuclease P protein component (125 aa).

It belongs to the RnpA family. Consists of a catalytic RNA component (M1 or rnpB) and a protein subunit.

The enzyme catalyses Endonucleolytic cleavage of RNA, removing 5'-extranucleotides from tRNA precursor.. RNaseP catalyzes the removal of the 5'-leader sequence from pre-tRNA to produce the mature 5'-terminus. It can also cleave other RNA substrates such as 4.5S RNA. The protein component plays an auxiliary but essential role in vivo by binding to the 5'-leader sequence and broadening the substrate specificity of the ribozyme. The chain is Ribonuclease P protein component from Rhodococcus opacus (strain B4).